A 353-amino-acid polypeptide reads, in one-letter code: Phosphoribosylformylglycinamidine cyclo-ligase (353 aa).

It belongs to the AIR synthase family.

The protein resides in the cytoplasm. It carries out the reaction 2-formamido-N(1)-(5-O-phospho-beta-D-ribosyl)acetamidine + ATP = 5-amino-1-(5-phospho-beta-D-ribosyl)imidazole + ADP + phosphate + H(+). It participates in purine metabolism; IMP biosynthesis via de novo pathway; 5-amino-1-(5-phospho-D-ribosyl)imidazole from N(2)-formyl-N(1)-(5-phospho-D-ribosyl)glycinamide: step 2/2. The sequence is that of Phosphoribosylformylglycinamidine cyclo-ligase from Magnetococcus marinus (strain ATCC BAA-1437 / JCM 17883 / MC-1).